Here is a 461-residue protein sequence, read N- to C-terminus: METLFNGTLALAGRDQETTGFAWWAGNARLINLSGKLLGAHVAHAGLIVFWAGAMNLFEVAHFVPEKPMYEQGLILLPHLATLGWGVGPGGEVIDTFPYFVSGVLHLISSAVLGFGGIYHALLGPETLEESFPFFGYVWKDRNKMTTILGIHLILLGIGAFLLVLKALYFGGVYDTWAPGGGDVRKITNLTLSPSVIFGYLLKSPFGGEGWIVSVDDLEDIIGGHVWLGSICILGGIWHILTKPFAWARRALVWSGEAYLSYSLGALSVFGFIACCFVWFNNTAYPSEFYGPTGPEASQAQAFTFLVRDQRLGANVGSAQGPTGLGKYLMRSPTGEVIFGGETMRFWDLRAPWLEPLRGPNGLDLSRLKKDIQPWQERRSAEYMTHAPLGSLNSVGGVATEINAVNYVSPRSWLATSHFVLGFFLFVGHLWHAGRARAAAAGFEKGIDRDFEPVLSMTPLN.

Residues 1 to 2 (ME) constitute a propeptide that is removed on maturation. T3 bears the N-acetylthreonine mark. T3 carries the post-translational modification Phosphothreonine. The next 5 membrane-spanning stretches (helical) occupy residues 57 to 81 (LFEV…PHLA), 122 to 143 (LLGP…KDRN), 166 to 188 (KALY…RKIT), 243 to 263 (KPFA…LSYS), and 279 to 300 (WFNN…ASQA). A [CaMn4O5] cluster-binding site is contributed by E355. A helical transmembrane segment spans residues 435–459 (RARAAAAGFEKGIDRDFEPVLSMTP).

Belongs to the PsbB/PsbC family. PsbC subfamily. In terms of assembly, PSII is composed of 1 copy each of membrane proteins PsbA, PsbB, PsbC, PsbD, PsbE, PsbF, PsbH, PsbI, PsbJ, PsbK, PsbL, PsbM, PsbT, PsbX, PsbY, PsbZ, Psb30/Ycf12, at least 3 peripheral proteins of the oxygen-evolving complex and a large number of cofactors. It forms dimeric complexes. Requires Binds multiple chlorophylls and provides some of the ligands for the Ca-4Mn-5O cluster of the oxygen-evolving complex. It may also provide a ligand for a Cl- that is required for oxygen evolution. PSII binds additional chlorophylls, carotenoids and specific lipids. as cofactor.

It is found in the plastid. The protein localises to the chloroplast thylakoid membrane. Functionally, one of the components of the core complex of photosystem II (PSII). It binds chlorophyll and helps catalyze the primary light-induced photochemical processes of PSII. PSII is a light-driven water:plastoquinone oxidoreductase, using light energy to abstract electrons from H(2)O, generating O(2) and a proton gradient subsequently used for ATP formation. This Platanus occidentalis (Sycamore) protein is Photosystem II CP43 reaction center protein.